The chain runs to 213 residues: Pyridoxine/pyridoxamine 5'-phosphate oxidase (213 aa).

FMN contacts are provided by residues 60-65 (RMVLMK), 75-76 (YS), K82, and Q104. K65 provides a ligand contact to substrate. Residues Y122 and R126 each coordinate substrate. FMN contacts are provided by residues 139–140 (QS) and W184. Position 190–192 (190–192 (RLH)) interacts with substrate. R194 contacts FMN.

This sequence belongs to the pyridoxamine 5'-phosphate oxidase family. In terms of assembly, homodimer. FMN serves as cofactor.

It carries out the reaction pyridoxamine 5'-phosphate + O2 + H2O = pyridoxal 5'-phosphate + H2O2 + NH4(+). The catalysed reaction is pyridoxine 5'-phosphate + O2 = pyridoxal 5'-phosphate + H2O2. It functions in the pathway cofactor metabolism; pyridoxal 5'-phosphate salvage; pyridoxal 5'-phosphate from pyridoxamine 5'-phosphate: step 1/1. The protein operates within cofactor metabolism; pyridoxal 5'-phosphate salvage; pyridoxal 5'-phosphate from pyridoxine 5'-phosphate: step 1/1. Its function is as follows. Catalyzes the oxidation of either pyridoxine 5'-phosphate (PNP) or pyridoxamine 5'-phosphate (PMP) into pyridoxal 5'-phosphate (PLP). The sequence is that of Pyridoxine/pyridoxamine 5'-phosphate oxidase from Nitrobacter hamburgensis (strain DSM 10229 / NCIMB 13809 / X14).